A 391-amino-acid chain; its full sequence is NAD(P)H-quinone oxidoreductase subunit H, chloroplastic (391 aa).

Belongs to the complex I 49 kDa subunit family. NDH is composed of at least 16 different subunits, 5 of which are encoded in the nucleus.

The protein resides in the plastid. Its subcellular location is the chloroplast thylakoid membrane. The enzyme catalyses a plastoquinone + NADH + (n+1) H(+)(in) = a plastoquinol + NAD(+) + n H(+)(out). It catalyses the reaction a plastoquinone + NADPH + (n+1) H(+)(in) = a plastoquinol + NADP(+) + n H(+)(out). In terms of biological role, NDH shuttles electrons from NAD(P)H:plastoquinone, via FMN and iron-sulfur (Fe-S) centers, to quinones in the photosynthetic chain and possibly in a chloroplast respiratory chain. The immediate electron acceptor for the enzyme in this species is believed to be plastoquinone. Couples the redox reaction to proton translocation, and thus conserves the redox energy in a proton gradient. The protein is NAD(P)H-quinone oxidoreductase subunit H, chloroplastic of Physcomitrium patens (Spreading-leaved earth moss).